The following is a 377-amino-acid chain: Putative F-box protein At1g70380 (377 aa).

One can recognise an F-box domain in the interval 3-48; the sequence is NTSFETLALDMQIEILARLPLKYLMRCMCVSKKWASLIRGEDFRSA.

The protein is Putative F-box protein At1g70380 of Arabidopsis thaliana (Mouse-ear cress).